The sequence spans 426 residues: Serine--tRNA ligase (426 aa).

The interval K36–E66 is disordered. A compositionally biased stretch (polar residues) spans D46–S55. T233–E235 is an L-serine binding site. Residue R264–E266 participates in ATP binding. Residue E287 participates in L-serine binding. Position 351–354 (E351–S354) interacts with ATP. Residue S387 participates in L-serine binding.

This sequence belongs to the class-II aminoacyl-tRNA synthetase family. Type-1 seryl-tRNA synthetase subfamily. Homodimer. The tRNA molecule binds across the dimer.

It is found in the cytoplasm. It carries out the reaction tRNA(Ser) + L-serine + ATP = L-seryl-tRNA(Ser) + AMP + diphosphate + H(+). The catalysed reaction is tRNA(Sec) + L-serine + ATP = L-seryl-tRNA(Sec) + AMP + diphosphate + H(+). The protein operates within aminoacyl-tRNA biosynthesis; selenocysteinyl-tRNA(Sec) biosynthesis; L-seryl-tRNA(Sec) from L-serine and tRNA(Sec): step 1/1. Catalyzes the attachment of serine to tRNA(Ser). Is also able to aminoacylate tRNA(Sec) with serine, to form the misacylated tRNA L-seryl-tRNA(Sec), which will be further converted into selenocysteinyl-tRNA(Sec). This Francisella tularensis subsp. novicida (strain U112) protein is Serine--tRNA ligase.